The sequence spans 500 residues: Lysine--tRNA ligase (500 aa).

Residues E410 and E417 each contribute to the Mg(2+) site.

The protein belongs to the class-II aminoacyl-tRNA synthetase family. As to quaternary structure, homodimer. Mg(2+) is required as a cofactor.

Its subcellular location is the cytoplasm. It carries out the reaction tRNA(Lys) + L-lysine + ATP = L-lysyl-tRNA(Lys) + AMP + diphosphate. In Pseudomonas putida (strain W619), this protein is Lysine--tRNA ligase.